The chain runs to 363 residues: MSDTPPDYPTLQSIGWPWPGPPEEAAWQAIFAAHPQALPARVVEQHRTGYVAADTPQASVKAESLPEWQRPRFPSHERAAVGDWVLMEGKRIVALLPRRTSIKRGAAGEHYHQQVIAANIDTVFIVCGLDADFNPRRIERYLLLVGGGGAQPVVVLTKADQTEYAEDALAVLEELEAQNIPLRAVNAKDPDSVAALRPWLGDGRTAVLVGSSGAGKSTLTNTLLGTQKMKTNAVRENDSRGRHTTTHRALIPLPSGACLIDTPGMRELKPTGEEDLAEGGFSDVEALAAQCRFNDCAHIAEPGCAVRAAIDAGELDPERVANYMKLRVEVASAAEKLATRVAQNNRGKGSGKRPASVDRPGRR.

One can recognise a CP-type G domain in the interval 112–268 (HQQVIAANID…LIDTPGMREL (157 aa)). Residues 157-160 (TKAD) and 210-218 (GSSGAGKST) each bind GTP. Cys-291, Cys-296, His-298, and Cys-304 together coordinate Zn(2+). Residues 340–363 (RVAQNNRGKGSGKRPASVDRPGRR) form a disordered region.

It belongs to the TRAFAC class YlqF/YawG GTPase family. RsgA subfamily. As to quaternary structure, monomer. Associates with 30S ribosomal subunit, binds 16S rRNA. Requires Zn(2+) as cofactor.

It localises to the cytoplasm. Its function is as follows. One of several proteins that assist in the late maturation steps of the functional core of the 30S ribosomal subunit. Helps release RbfA from mature subunits. May play a role in the assembly of ribosomal proteins into the subunit. Circularly permuted GTPase that catalyzes slow GTP hydrolysis, GTPase activity is stimulated by the 30S ribosomal subunit. This Xanthomonas euvesicatoria pv. vesicatoria (strain 85-10) (Xanthomonas campestris pv. vesicatoria) protein is Small ribosomal subunit biogenesis GTPase RsgA.